A 119-amino-acid chain; its full sequence is Putative ankyrin repeat domain-containing protein 26-like 1 (119 aa).

Residues 15–112 (EKEEDLLHKN…EKQSRQRLTK (98 aa)) are a coiled coil.

The polypeptide is Putative ankyrin repeat domain-containing protein 26-like 1 (ANKRD36BP1) (Homo sapiens (Human)).